We begin with the raw amino-acid sequence, 350 residues long: Casein kinase II subunit alpha' (350 aa).

A Protein kinase domain is found at 40-325 (YQLVRKLGRG…AKEAMEHPYF (286 aa)). Residues 46 to 54 (LGRGKYSEV) and lysine 69 contribute to the ATP site. The active-site Proton acceptor is aspartate 157.

This sequence belongs to the protein kinase superfamily. Ser/Thr protein kinase family. CK2 subfamily. In terms of assembly, tetramer composed of an alpha chain, an alpha' and two beta chains.

The enzyme catalyses L-seryl-[protein] + ATP = O-phospho-L-seryl-[protein] + ADP + H(+). The catalysed reaction is L-threonyl-[protein] + ATP = O-phospho-L-threonyl-[protein] + ADP + H(+). Its function is as follows. Casein kinases are operationally defined by their preferential utilization of acidic proteins such as caseins as substrates. The alpha and alpha' chains contain the catalytic site. Participates in Wnt signaling. The sequence is that of Casein kinase II subunit alpha' from Gallus gallus (Chicken).